Here is a 280-residue protein sequence, read N- to C-terminus: MSQLLHLHRLSLPQSSLRFRFPPLHRRRAASSPTNSTQPPLQFRPLTVSRSQITCRFSQSDITPQFELDKAKDNRKPQKRANGIFWIILINLGIYLADHFFQVRGIKSLYLYHNFPAWYQFVTATFCHANWNHLSSNLFFLYIFGKLVEEEEGNFGLWLSYLFTGVGANLVSWLVLPRNAVSVGASGAVFGLFAISVLVKMSWDWRKILEVLILGQFVIERVMEAAQASAGLSGTIYGGYSLQTVNHIAHLSGALVGVVLVWLLSKFPSASMDQDVKKSS.

A chloroplast-targeting transit peptide spans 1-57; the sequence is MSQLLHLHRLSLPQSSLRFRFPPLHRRRAASSPTNSTQPPLQFRPLTVSRSQITCRF. Residues 58–82 are Stromal-facing; sequence SQSDITPQFELDKAKDNRKPQKRAN. Residues 83 to 103 form a helical membrane-spanning segment; sequence GIFWIILINLGIYLADHFFQV. The Chloroplast intermembrane portion of the chain corresponds to 104–117; the sequence is RGIKSLYLYHNFPA. A helical transmembrane segment spans residues 118–140; sequence WYQFVTATFCHANWNHLSSNLFF. Over 141 to 154 the chain is Stromal; sequence LYIFGKLVEEEEGN. A helical membrane pass occupies residues 155–175; that stretch reads FGLWLSYLFTGVGANLVSWLV. Topologically, residues 176–178 are chloroplast intermembrane; that stretch reads LPR. The helical transmembrane segment at 179–199 threads the bilayer; that stretch reads NAVSVGASGAVFGLFAISVLV. Residue Ser-186 is the Nucleophile of the active site. Over 200-243 the chain is Stromal; sequence KMSWDWRKILEVLILGQFVIERVMEAAQASAGLSGTIYGGYSLQ. A helical transmembrane segment spans residues 244–264; the sequence is TVNHIAHLSGALVGVVLVWLL. The active-site Charge relay system is His-250. The Chloroplast intermembrane segment spans residues 265 to 280; that stretch reads SKFPSASMDQDVKKSS.

The protein belongs to the peptidase S54 family. In terms of assembly, homooligomer.

It is found in the plastid. The protein localises to the chloroplast inner membrane. In terms of biological role, rhomboid-type serine protease that catalyzes intramembrane proteolysis. May be involved in TIC22 processing during its import. The protein is Rhomboid-like protein 11, chloroplastic of Arabidopsis thaliana (Mouse-ear cress).